A 98-amino-acid chain; its full sequence is Feather keratin 2 (98 aa).

N-acetylserine is present on Ser2.

Belongs to the avian keratin family. As to quaternary structure, the avian keratins (F-ker, S-ker, C-ker and B-ker) are a complex mixture of very similar polypeptides.

The sequence is that of Feather keratin 2 from Gallus gallus (Chicken).